The chain runs to 458 residues: RuvB-like helicase 1 (458 aa).

71–78 (GGPGTGKT) is an ATP binding site.

It belongs to the RuvB family. As to quaternary structure, may form heterododecamers with RVB2. Component of the SWR1 chromatin remodeling complex, the INO80 chromatin remodeling complex, and of the R2TP complex.

It is found in the nucleus. It carries out the reaction ATP + H2O = ADP + phosphate + H(+). Functionally, DNA helicase which participates in several chromatin remodeling complexes, including the SWR1 and the INO80 complexes. The SWR1 complex mediates the ATP-dependent exchange of histone H2A for the H2A variant HZT1 leading to transcriptional regulation of selected genes by chromatin remodeling. The INO80 complex remodels chromatin by shifting nucleosomes and is involved in DNA repair. Also involved in pre-rRNA processing. This Gibberella zeae (strain ATCC MYA-4620 / CBS 123657 / FGSC 9075 / NRRL 31084 / PH-1) (Wheat head blight fungus) protein is RuvB-like helicase 1 (RVB1).